A 450-amino-acid chain; its full sequence is Probable glucan endo-1,3-beta-glucosidase eglC (450 aa).

The N-terminal stretch at 1-18 (MQFTHLVALALALATSEA) is a signal peptide. Residue Glu128 is the Proton donor of the active site. Asn183 is a glycosylation site (N-linked (GlcNAc...) asparagine). The Nucleophile role is filled by Glu239. Residues Asn362 and Asn368 are each glycosylated (N-linked (GlcNAc...) asparagine). Low complexity-rich tracts occupy residues 377–395 (SSAISGSSSGSAAGSSGSS) and 405–420 (ASGQSSSSTGSSSAPS). The disordered stretch occupies residues 377–420 (SSAISGSSSGSAAGSSGSSGSSGSGASGASGQSSSSTGSSSAPS). A lipid anchor (GPI-anchor amidated asparagine) is attached at Asn427. The propeptide at 428–450 (AASGLSGSICGAVVAVCLALAAL) is removed in mature form.

The protein belongs to the glycosyl hydrolase 17 family. The GPI-anchor is attached to the protein in the endoplasmic reticulum and serves to target the protein to the cell surface. There, the glucosamine-inositol phospholipid moiety is cleaved off and the GPI-modified mannoprotein is covalently attached via its lipidless GPI glycan remnant to the 1,6-beta-glucan of the outer cell wall layer.

The protein resides in the cell membrane. It is found in the secreted. It localises to the cell wall. It catalyses the reaction Hydrolysis of (1-&gt;3)-beta-D-glucosidic linkages in (1-&gt;3)-beta-D-glucans.. Glucanases play a role in cell expansion during growth, in cell-cell fusion during mating, and in spore release during sporulation. This enzyme may be involved in beta-glucan degradation and also function biosynthetically as a transglycosylase. This chain is Probable glucan endo-1,3-beta-glucosidase eglC (eglC), found in Aspergillus fumigatus (strain CBS 144.89 / FGSC A1163 / CEA10) (Neosartorya fumigata).